The chain runs to 463 residues: L-seryl-tRNA(Sec) selenium transferase (463 aa).

Lys295 is subject to N6-(pyridoxal phosphate)lysine.

Belongs to the SelA family. In terms of assembly, homodecamer; pentamer of dimers. Binds only one seryl-tRNA(Sec) per dimer. Pyridoxal 5'-phosphate serves as cofactor.

It is found in the cytoplasm. The catalysed reaction is L-seryl-tRNA(Sec) + selenophosphate + H(+) = L-selenocysteinyl-tRNA(Sec) + phosphate. It participates in aminoacyl-tRNA biosynthesis; selenocysteinyl-tRNA(Sec) biosynthesis; selenocysteinyl-tRNA(Sec) from L-seryl-tRNA(Sec) (bacterial route): step 1/1. In terms of biological role, converts seryl-tRNA(Sec) to selenocysteinyl-tRNA(Sec) required for selenoprotein biosynthesis. The chain is L-seryl-tRNA(Sec) selenium transferase from Salmonella schwarzengrund (strain CVM19633).